An 80-amino-acid polypeptide reads, in one-letter code: Large ribosomal subunit protein bL31B (80 aa).

The protein belongs to the bacterial ribosomal protein bL31 family. Type B subfamily. As to quaternary structure, part of the 50S ribosomal subunit.

This Streptococcus sanguinis (strain SK36) protein is Large ribosomal subunit protein bL31B.